The chain runs to 952 residues: Disintegrin and metalloproteinase domain-containing protein adm-2 (952 aa).

The Extracellular portion of the chain corresponds to 1 to 672; the sequence is MTDTLDLKLS…NEAYRFRGIT (672 aa). Asparagine 125 and asparagine 301 each carry an N-linked (GlcNAc...) asparagine glycan. The Peptidase M12B domain occupies 177–373; sequence RFVELALVAD…GIDLCLFNEP (197 aa). 3 disulfides stabilise this stretch: cysteine 287/cysteine 368, cysteine 330/cysteine 352, and cysteine 332/cysteine 337. Residue histidine 312 coordinates Zn(2+). Residue glutamate 313 is part of the active site. Zn(2+)-binding residues include histidine 316 and histidine 322. The Disintegrin domain maps to 379–466; the sequence is DAKCGNGIVE…DCPADFFVQN (88 aa). Residue asparagine 406 is glycosylated (N-linked (GlcNAc...) asparagine). 4 disulfide bridges follow: cysteine 438–cysteine 458, cysteine 624–cysteine 634, cysteine 628–cysteine 640, and cysteine 642–cysteine 651. An EGF-like domain is found at 620–652; the sequence is VTAQCLDNCNFRGVCNNVGNCHCERGFGGIACE. Residues 673-693 form a helical membrane-spanning segment; sequence LSSTFLVFFCLFGIFIGGLCV. Residues 694–952 lie on the Cytoplasmic side of the membrane; that stretch reads YYRVKRKRNL…AAIFDQKLKK (259 aa). Disordered stretches follow at residues 778–809 and 829–938; these read IPMVTLKNPNLASPTPLLNPAEKEEQNQERAT and SFNT…EKVD. 2 stretches are compositionally biased toward basic and acidic residues: residues 798 to 809 and 849 to 873; these read AEKEEQNQERAT and PSDDVLSKLNEDLAKEKNAKFDRLN. A compositionally biased stretch (pro residues) spans 905–914; sequence QAPPPPPPAH. Positions 925–938 are enriched in basic and acidic residues; that stretch reads KVSEDAAATEEKVD.

Requires Zn(2+) as cofactor. Expressed in hyp7 large epidermal syncytium (punctate distribution), seam cell syncytia, anterior epidermis, neurons located in the head, tail and central body, proximal oogenic cells (levels increasing in maturing oocytes) and myoepithelial cells of the spermatheca (at protein level). Not detected in mature sperm cells.

It localises to the cell membrane. Its subcellular location is the endosome membrane. It is found in the lysosome membrane. Its function is as follows. Metalloprotease that cleaves and releases a number of molecules. Negative regulator of lrp-1 protein levels, potentially by influencing its endosomal trafficking. Involved in regulating the molting process. This is Disintegrin and metalloproteinase domain-containing protein adm-2 from Caenorhabditis elegans.